Consider the following 211-residue polypeptide: 3,4-dihydroxy-2-butanone 4-phosphate synthase (211 aa).

Residues 37 to 38 (RE), Asp-42, 150 to 154 (RGGHT), and Glu-174 each bind D-ribulose 5-phosphate. A Mg(2+)-binding site is contributed by Glu-38. A Mg(2+)-binding site is contributed by His-153.

This sequence belongs to the DHBP synthase family. Homodimer. It depends on Mg(2+) as a cofactor. Requires Mn(2+) as cofactor.

The enzyme catalyses D-ribulose 5-phosphate = (2S)-2-hydroxy-3-oxobutyl phosphate + formate + H(+). It functions in the pathway cofactor biosynthesis; riboflavin biosynthesis; 2-hydroxy-3-oxobutyl phosphate from D-ribulose 5-phosphate: step 1/1. In terms of biological role, catalyzes the conversion of D-ribulose 5-phosphate to formate and 3,4-dihydroxy-2-butanone 4-phosphate. This chain is 3,4-dihydroxy-2-butanone 4-phosphate synthase, found in Baumannia cicadellinicola subsp. Homalodisca coagulata.